The chain runs to 303 residues: Oxygen-dependent coproporphyrinogen-III oxidase (303 aa).

A substrate-binding site is contributed by Ser-93. A divalent metal cation-binding residues include His-97 and His-107. His-107 functions as the Proton donor in the catalytic mechanism. Asn-109–Arg-111 lines the substrate pocket. A divalent metal cation is bound by residues His-146 and His-176. Positions Tyr-241–Gly-276 are important for dimerization. Gly-259 to Arg-261 serves as a coordination point for substrate.

The protein belongs to the aerobic coproporphyrinogen-III oxidase family. Homodimer. It depends on a divalent metal cation as a cofactor.

Its subcellular location is the cytoplasm. It catalyses the reaction coproporphyrinogen III + O2 + 2 H(+) = protoporphyrinogen IX + 2 CO2 + 2 H2O. Its pathway is porphyrin-containing compound metabolism; protoporphyrin-IX biosynthesis; protoporphyrinogen-IX from coproporphyrinogen-III (O2 route): step 1/1. In terms of biological role, involved in the heme biosynthesis. Catalyzes the aerobic oxidative decarboxylation of propionate groups of rings A and B of coproporphyrinogen-III to yield the vinyl groups in protoporphyrinogen-IX. This is Oxygen-dependent coproporphyrinogen-III oxidase from Pseudomonas putida (strain ATCC 700007 / DSM 6899 / JCM 31910 / BCRC 17059 / LMG 24140 / F1).